The sequence spans 150 residues: Ribosome-binding factor A (150 aa).

The interval 126 to 150 is disordered; it reads EVARDLSHDDDEDGGADEAPRNGDE.

This sequence belongs to the RbfA family. As to quaternary structure, monomer. Binds 30S ribosomal subunits, but not 50S ribosomal subunits or 70S ribosomes.

It is found in the cytoplasm. One of several proteins that assist in the late maturation steps of the functional core of the 30S ribosomal subunit. Associates with free 30S ribosomal subunits (but not with 30S subunits that are part of 70S ribosomes or polysomes). Required for efficient processing of 16S rRNA. May interact with the 5'-terminal helix region of 16S rRNA. The polypeptide is Ribosome-binding factor A (Brucella abortus (strain S19)).